Here is a 246-residue protein sequence, read N- to C-terminus: N-alpha-acetyltransferase 11 (246 aa).

The interaction with NAA15 stretch occupies residues 1–58 (MNIRNARPEDLMNMQHCNLLCLPENYQMKYYFYHGLSWPQLSYIAEDEDGKIVGYVLA). Positions 1 to 152 (MNIRNARPED…DAYAMKRDLA (152 aa)) constitute an N-acetyltransferase domain. Positions 175 to 246 (EENQEAQDST…DSSEYLDSTS (72 aa)) are disordered. Polar residues predominate over residues 230–246 (SHSTDVQDSSEYLDSTS).

This sequence belongs to the acetyltransferase family. ARD1 subfamily. Component of the N-terminal acetyltransferase A (NatA) complex composed of NAA11 and NAA15. Interacts with HIF1A.

The protein localises to the cytoplasm. It localises to the nucleus. It catalyses the reaction N-terminal glycyl-[protein] + acetyl-CoA = N-terminal N(alpha)-acetylglycyl-[protein] + CoA + H(+). It carries out the reaction N-terminal L-alanyl-[protein] + acetyl-CoA = N-terminal N(alpha)-acetyl-L-alanyl-[protein] + CoA + H(+). The enzyme catalyses N-terminal L-seryl-[protein] + acetyl-CoA = N-terminal N(alpha)-acetyl-L-seryl-[protein] + CoA + H(+). The catalysed reaction is N-terminal L-valyl-[protein] + acetyl-CoA = N-terminal N(alpha)-acetyl-L-valyl-[protein] + CoA + H(+). It catalyses the reaction N-terminal L-cysteinyl-[protein] + acetyl-CoA = N-terminal N(alpha)-acetyl-L-cysteinyl-[protein] + CoA + H(+). It carries out the reaction N-terminal L-threonyl-[protein] + acetyl-CoA = N-terminal N(alpha)-acetyl-L-threonyl-[protein] + CoA + H(+). Functionally, displays alpha (N-terminal) acetyltransferase activity. Proposed alternative catalytic subunit of the N-terminal acetyltransferase A (NatA) complex. The chain is N-alpha-acetyltransferase 11 (Naa11) from Rattus norvegicus (Rat).